A 475-amino-acid chain; its full sequence is Tryptophan--tRNA ligase, cytoplasmic (475 aa).

In terms of domain architecture, WHEP-TRS spans 12–68; that stretch reads SPQELFSSIAAQGELVKSLKARKAPKEEIDSAVKMLLSLKTSYKEAMGEDYKADCPP. The interval 61–87 is disordered; it reads DYKADCPPGNSTPDSHGDPEAVDDKED. The residue at position 158 (Lys-158) is an N6-succinyllysine. A 'HIGH' region motif is present at residues 168-177; sequence PSSEAMHVGH. The 'KMSKS' region signature appears at 353–357; it reads KMSAS. Ser-355 is modified (phosphoserine).

The protein belongs to the class-I aminoacyl-tRNA synthetase family. As to quaternary structure, homodimer. Interacts with oxidized form of GAPDH. Proteolytic cleavage generates 2 forms; T1-TrpRS and T2-TrpRS.

Its subcellular location is the cytoplasm. The catalysed reaction is tRNA(Trp) + L-tryptophan + ATP = L-tryptophyl-tRNA(Trp) + AMP + diphosphate + H(+). Catalyzes the attachment of tryptophan to tRNA(Trp) in a two-step reaction: tryptophan is first activated by ATP to form Trp-AMP and then transferred to the acceptor end of the tRNA(Trp). Could also possess an angiostatic activity. The sequence is that of Tryptophan--tRNA ligase, cytoplasmic (WARS1) from Oryctolagus cuniculus (Rabbit).